We begin with the raw amino-acid sequence, 337 residues long: Protein-methionine-sulfoxide reductase catalytic subunit MsrP (337 aa).

The tat-type signal signal peptide spans 1 to 54 (MLIKLPRSSECKASEITPEGIYLSRRTLLGGSLAGLALGALPGGVGAAQMSRYA). Residues N94, 97 to 98 (YE), C152, T187, N237, R242, and 253 to 255 (SIK) each bind Mo-molybdopterin.

The protein belongs to the MsrP family. Heterodimer of a catalytic subunit (MsrP) and a heme-binding subunit (MsrQ). The cofactor is Mo-molybdopterin. Post-translationally, predicted to be exported by the Tat system. The position of the signal peptide cleavage has not been experimentally proven.

Its subcellular location is the periplasm. It catalyses the reaction L-methionyl-[protein] + a quinone + H2O = L-methionyl-(S)-S-oxide-[protein] + a quinol. The enzyme catalyses L-methionyl-[protein] + a quinone + H2O = L-methionyl-(R)-S-oxide-[protein] + a quinol. Part of the MsrPQ system that repairs oxidized periplasmic proteins containing methionine sulfoxide residues (Met-O), using respiratory chain electrons. Thus protects these proteins from oxidative-stress damage caused by reactive species of oxygen and chlorine generated by the host defense mechanisms. MsrPQ is essential for the maintenance of envelope integrity under bleach stress, rescuing a wide series of structurally unrelated periplasmic proteins from methionine oxidation. The catalytic subunit MsrP is non-stereospecific, being able to reduce both (R-) and (S-) diastereoisomers of methionine sulfoxide. The polypeptide is Protein-methionine-sulfoxide reductase catalytic subunit MsrP (Pseudomonas putida (strain ATCC 47054 / DSM 6125 / CFBP 8728 / NCIMB 11950 / KT2440)).